A 304-amino-acid chain; its full sequence is Large ribosomal subunit protein uL18 (304 aa).

The protein belongs to the universal ribosomal protein uL18 family. In terms of assembly, component of a hexameric 5S RNP precursor complex, composed of 5S RNA, RRS1, RPF2, RPL5, RPL11 and SYO1; this complex acts as a precursor for ribosome assembly.

It localises to the cytoplasm. Functionally, component of the ribosome, a large ribonucleoprotein complex responsible for the synthesis of proteins in the cell. The small ribosomal subunit (SSU) binds messenger RNAs (mRNAs) and translates the encoded message by selecting cognate aminoacyl-transfer RNA (tRNA) molecules. The large subunit (LSU) contains the ribosomal catalytic site termed the peptidyl transferase center (PTC), which catalyzes the formation of peptide bonds, thereby polymerizing the amino acids delivered by tRNAs into a polypeptide chain. The nascent polypeptides leave the ribosome through a tunnel in the LSU and interact with protein factors that function in enzymatic processing, targeting, and the membrane insertion of nascent chains at the exit of the ribosomal tunnel. The polypeptide is Large ribosomal subunit protein uL18 (Chaetomium thermophilum (strain DSM 1495 / CBS 144.50 / IMI 039719) (Thermochaetoides thermophila)).